The primary structure comprises 321 residues: Putative ribose-phosphate pyrophosphokinase 2 (321 aa).

Residues 41–43 and 100–101 contribute to the ATP site; these read DGE and RQ. His-134 lines the Mg(2+) pocket. D-ribose 5-phosphate contacts are provided by residues Asp-223 and 227-231; that span reads NTGVT.

Belongs to the ribose-phosphate pyrophosphokinase family. Class I subfamily. Homohexamer. Mg(2+) is required as a cofactor.

It localises to the cytoplasm. It catalyses the reaction D-ribose 5-phosphate + ATP = 5-phospho-alpha-D-ribose 1-diphosphate + AMP + H(+). Its pathway is metabolic intermediate biosynthesis; 5-phospho-alpha-D-ribose 1-diphosphate biosynthesis; 5-phospho-alpha-D-ribose 1-diphosphate from D-ribose 5-phosphate (route I): step 1/1. In terms of biological role, involved in the biosynthesis of the central metabolite phospho-alpha-D-ribosyl-1-pyrophosphate (PRPP) via the transfer of pyrophosphoryl group from ATP to 1-hydroxyl of ribose-5-phosphate (Rib-5-P). In Lactococcus lactis subsp. lactis (strain IL1403) (Streptococcus lactis), this protein is Putative ribose-phosphate pyrophosphokinase 2.